We begin with the raw amino-acid sequence, 247 residues long: Cell division protein ZapD (247 aa).

It belongs to the ZapD family. Interacts with FtsZ.

Its subcellular location is the cytoplasm. In terms of biological role, cell division factor that enhances FtsZ-ring assembly. Directly interacts with FtsZ and promotes bundling of FtsZ protofilaments, with a reduction in FtsZ GTPase activity. The chain is Cell division protein ZapD from Salmonella agona (strain SL483).